The primary structure comprises 485 residues: Trigger factor (485 aa).

A PPIase FKBP-type domain is found at 171–256 (GDRVVIDFVG…VKAVKAPGEA (86 aa)). Residues 443 to 485 (FADDEDEAAEAAAPASEAGASKGVISEGVISEGSAPSHETGAA) form a disordered region. Residues 452–462 (EAAAPASEAGA) are compositionally biased toward low complexity.

The protein belongs to the FKBP-type PPIase family. Tig subfamily.

It is found in the cytoplasm. The enzyme catalyses [protein]-peptidylproline (omega=180) = [protein]-peptidylproline (omega=0). Involved in protein export. Acts as a chaperone by maintaining the newly synthesized protein in an open conformation. Functions as a peptidyl-prolyl cis-trans isomerase. This is Trigger factor from Methylobacterium sp. (strain 4-46).